The chain runs to 480 residues: UDP-N-acetylmuramoylalanine--D-glutamate ligase (480 aa).

120-126 contributes to the ATP binding site; sequence GTNGKTT.

It belongs to the MurCDEF family.

The protein resides in the cytoplasm. The enzyme catalyses UDP-N-acetyl-alpha-D-muramoyl-L-alanine + D-glutamate + ATP = UDP-N-acetyl-alpha-D-muramoyl-L-alanyl-D-glutamate + ADP + phosphate + H(+). Its pathway is cell wall biogenesis; peptidoglycan biosynthesis. In terms of biological role, cell wall formation. Catalyzes the addition of glutamate to the nucleotide precursor UDP-N-acetylmuramoyl-L-alanine (UMA). This Nocardia farcinica (strain IFM 10152) protein is UDP-N-acetylmuramoylalanine--D-glutamate ligase.